Here is a 242-residue protein sequence, read N- to C-terminus: Phosphoribosylaminoimidazole-succinocarboxamide synthase (242 aa).

The protein belongs to the SAICAR synthetase family.

It carries out the reaction 5-amino-1-(5-phospho-D-ribosyl)imidazole-4-carboxylate + L-aspartate + ATP = (2S)-2-[5-amino-1-(5-phospho-beta-D-ribosyl)imidazole-4-carboxamido]succinate + ADP + phosphate + 2 H(+). It participates in purine metabolism; IMP biosynthesis via de novo pathway; 5-amino-1-(5-phospho-D-ribosyl)imidazole-4-carboxamide from 5-amino-1-(5-phospho-D-ribosyl)imidazole-4-carboxylate: step 1/2. This is Phosphoribosylaminoimidazole-succinocarboxamide synthase from Pediococcus pentosaceus (strain ATCC 25745 / CCUG 21536 / LMG 10740 / 183-1w).